The following is a 103-amino-acid chain: Spherulin-3A (103 aa).

The segment at Met-1–Lys-13 is N-terminal arm. Beta/gamma crystallin 'Greek key' domains are found at residues Gly-14–Pro-55 and Thr-57–Thr-99.

Belongs to the beta/gamma-crystallin family.

Its subcellular location is the cytoplasm. Its function is as follows. Structural protein. This Physarum polycephalum (Slime mold) protein is Spherulin-3A.